The sequence spans 262 residues: MKAAWSGFLLSVQFLTVIPIRKQIDWNAATARWSVRAFPLVGALIGVIEAVTYFIFSSFSSLSPLFLALSLMWLSIWIAGGLHADGWMDVSDAFFSYRDIKRRQEIMSDSRVGAFAVLSILCLLSFRFLFVFETIRSHLDIFLISVIPLLSRTAMAWLLIYGKPAKQTGMAAAFREHADRYDAHVAMIIGNCLLACLCAIHFSVWKTVIFLACGTIFAVFVARLFFEKQFGGITGDALGAFVEGVETWLWCMIWLLRSYVMV.

The next 8 membrane-spanning stretches (helical) occupy residues 4–21, 37–57, 62–82, 112–132, 141–161, 181–201, 202–222, and 236–256; these read AWSG…IPIR, AFPL…FIFS, LSPL…AGGL, VGAF…LFVF, IFLI…LLIY, YDAH…CAIH, FSVW…VFVA, and DALG…IWLL.

Belongs to the CobS family. Mg(2+) is required as a cofactor.

Its subcellular location is the cell membrane. The enzyme catalyses alpha-ribazole + adenosylcob(III)inamide-GDP = adenosylcob(III)alamin + GMP + H(+). The catalysed reaction is alpha-ribazole 5'-phosphate + adenosylcob(III)inamide-GDP = adenosylcob(III)alamin 5'-phosphate + GMP + H(+). It participates in cofactor biosynthesis; adenosylcobalamin biosynthesis; adenosylcobalamin from cob(II)yrinate a,c-diamide: step 7/7. Joins adenosylcobinamide-GDP and alpha-ribazole to generate adenosylcobalamin (Ado-cobalamin). Also synthesizes adenosylcobalamin 5'-phosphate from adenosylcobinamide-GDP and alpha-ribazole 5'-phosphate. The polypeptide is Adenosylcobinamide-GDP ribazoletransferase (Geobacillus sp. (strain WCH70)).